Here is a 161-residue protein sequence, read N- to C-terminus: Protein-export protein SecB (161 aa).

It belongs to the SecB family. In terms of assembly, homotetramer, a dimer of dimers. One homotetramer interacts with 1 SecA dimer.

It localises to the cytoplasm. Functionally, one of the proteins required for the normal export of preproteins out of the cell cytoplasm. It is a molecular chaperone that binds to a subset of precursor proteins, maintaining them in a translocation-competent state. It also specifically binds to its receptor SecA. This is Protein-export protein SecB from Shewanella sp. (strain ANA-3).